The chain runs to 271 residues: D-methionine-binding lipoprotein MetQ (271 aa).

An N-terminal signal peptide occupies residues 1–22 (MAFKFKTFAAVGALIGSLALAG). Residue Cys-23 is the site of N-palmitoyl cysteine attachment. Residue Cys-23 is the site of S-diacylglycerol cysteine attachment.

Belongs to the NlpA lipoprotein family.

It localises to the cell membrane. In terms of biological role, this protein is a component of a D-methionine permease, a binding protein-dependent, ATP-driven transport system. The protein is D-methionine-binding lipoprotein MetQ (metQ) of Salmonella typhi.